A 643-amino-acid polypeptide reads, in one-letter code: Phosphatidylinositol-3,5-bisphosphate 3-phosphatase MTMR2 (643 aa).

Polar residues-rich tracts occupy residues 1–12 and 23–40; these read MEKSSSCESLGS and DSLS…VHTK. The tract at residues 1–56 is disordered; that stretch reads MEKSSSCESLGSQPAAARPPSVDSLSSASTSHSENSVHTKSASVVSSDSISTSADN. Phosphoserine is present on residues S6 and S9. The segment covering 41-55 has biased composition (low complexity); the sequence is SASVVSSDSISTSAD. A Phosphoserine modification is found at S58. Residues 68 to 139 form the GRAM domain; the sequence is NKLAEMEEPP…GVINRVEKIG (72 aa). The Myotubularin phosphatase domain maps to 205 to 580; that stretch reads GWKLYDPLLE…RHLELWVGYY (376 aa). N330, N355, and I356 together coordinate a 1,2-diacyl-sn-glycero-3-phospho-(1D-myo-inositol-3,5-bisphosphate). A 1,2-diacyl-sn-glycero-3-phospho-(1D-myo-inositol-3-phosphate) contacts are provided by N330, N355, and I356. Residue C417 is the Phosphocysteine intermediate of the active site. A 1,2-diacyl-sn-glycero-3-phospho-(1D-myo-inositol-3,5-bisphosphate) contacts are provided by S418, D419, G420, W421, D422, R423, R459, and R463. A 1,2-diacyl-sn-glycero-3-phospho-(1D-myo-inositol-3-phosphate)-binding residues include S418, D419, G420, W421, D422, and R423. R463 is a binding site for a 1,2-diacyl-sn-glycero-3-phospho-(1D-myo-inositol-3-phosphate). The stretch at 593–627 forms a coiled coil; sequence IHNRYKELLAKRAELQKKVEELQREISNRSTSSSE. Residues 615 to 643 are disordered; it reads QREISNRSTSSSERASSPAQCVTPVQTVV. A compositionally biased stretch (low complexity) spans 620–631; the sequence is NRSTSSSERASS. Polar residues predominate over residues 632–643; that stretch reads PAQCVTPVQTVV.

Belongs to the protein-tyrosine phosphatase family. Non-receptor class myotubularin subfamily. In terms of assembly, homodimer (via coiled-coil domain). Heterotetramer consisting of one MTMR2 dimer and one SBF2/MTMR13 dimer; specifically in peripheral nerves stabilizes SBF2/MTMR13 at the membranes and increases MTMR2 catalytic activity towards phosphatidylinositol 3,5-bisphosphate and to a lesser extent towards phosphatidylinositol 3-phosphate. Heterodimer with SBF1/MTMR5; acts as an adapter for the phosphatase MTMR2 to regulate MTMR2 catalytic activity and subcellular location. Heterodimer with MTMR12. In terms of processing, phosphorylation at Ser-58 decreases MTMR2 localization to endocytic vesicular structures.

Its subcellular location is the cytoplasm. The protein localises to the early endosome membrane. It localises to the perinuclear region. The protein resides in the cell projection. It is found in the axon. Its subcellular location is the endosome membrane. It catalyses the reaction a 1,2-diacyl-sn-glycero-3-phospho-(1D-myo-inositol-3,5-bisphosphate) + H2O = a 1,2-diacyl-sn-glycero-3-phospho-(1D-myo-inositol-5-phosphate) + phosphate. The enzyme catalyses a 1,2-diacyl-sn-glycero-3-phospho-(1D-myo-inositol-3-phosphate) + H2O = a 1,2-diacyl-sn-glycero-3-phospho-(1D-myo-inositol) + phosphate. The catalysed reaction is 1,2-dioctanoyl-sn-glycero-3-phospho-(1-D-myo-inositol-3-phosphate) + H2O = 1,2-dioctanoyl-sn-glycero-3-phospho-(1D-myo-inositol) + phosphate. It carries out the reaction 1,2-dioctanoyl-sn-glycero-3-phospho-(1D-myo-inositol-3,5-bisphosphate) + H2O = 1,2-dioctanoyl-sn-glycero-3-phospho-(1D-myo-inositol-5-phosphate) + phosphate. Functionally, lipid phosphatase that specifically dephosphorylates the D-3 position of phosphatidylinositol 3-phosphate and phosphatidylinositol 3,5-bisphosphate, generating phosphatidylinositol and phosphatidylinositol 5-phosphate. Regulates the level of these phosphoinositides critical for various biological processes including autophagy initiation and autophagosome maturation. The chain is Phosphatidylinositol-3,5-bisphosphate 3-phosphatase MTMR2 from Homo sapiens (Human).